A 161-amino-acid polypeptide reads, in one-letter code: Ethylene-responsive transcription factor ERF070 (161 aa).

The disordered stretch occupies residues 1–35; that stretch reads MKRIIRISFTDAEATDSSSDEDTEERGGASQTRRR. The segment at residues 78–140 is a DNA-binding region (AP2/ERF); that stretch reads KYRGVRQRPW…IGPHAPTNFG (63 aa).

Belongs to the AP2/ERF transcription factor family. ERF subfamily.

The protein localises to the nucleus. Its function is as follows. Probably acts as a transcriptional activator. Binds to the GCC-box pathogenesis-related promoter element. May be involved in the regulation of gene expression by stress factors and by components of stress signal transduction pathways. The sequence is that of Ethylene-responsive transcription factor ERF070 (ERF070) from Arabidopsis thaliana (Mouse-ear cress).